An 839-amino-acid polypeptide reads, in one-letter code: Katanin p80 WD40 repeat-containing subunit B1 homolog KTN80.3 (839 aa).

WD repeat units lie at residues 14-54 (AHSA…AILS), 57-96 (GHSS…VVRT), 99-138 (GHRS…CIHT), 141-182 (GHTR…HEFK), 184-222 (HEGK…LIGS), 225-265 (TETT…DGVD), and 267-304 (GWSN…TEPM). Positions 115 to 131 (FFASGSLDTNLKIWDIR) match the DWD box motif. 4 disordered regions span residues 303 to 340 (PMSG…LGKL), 357 to 435 (GKLS…KSAS), 501 to 561 (LQSK…RTNK), and 575 to 648 (SLVR…PSNM). Polar residues-rich tracts occupy residues 307–334 (GATQ…NSSK), 375–385 (TGRSSVSQSSD), 411–435 (TLSS…KSAS), 501–533 (LQSK…QSQP), 589–602 (DLIS…SSPT), and 630–648 (VSSS…PSNM).

It belongs to the WD repeat KATNB1 family. Component of KTN80-KTN1 complexes composed of a hexamer of KTN1-KTN80 heterodimers that sense microtubule (MT) geometry to confer precise MT severing. Interacts directly with AAA1/KTN1 and KTN80.1, and weakly with KTN80.4. Expressed in siliques, flowers, leaves, stems and roots.

It is found in the cytoplasm. The protein resides in the cytoskeleton. Its function is as follows. May participate in a complex which severs microtubules in an ATP-dependent manner. Microtubule severing may promote rapid reorganization of cellular microtubule arrays. Confers precision to microtubule (MT) severing by specific targeting of KTN1 to MT cleavage sites such as crossover or branching nucleation sites. Together with other KTN80s, regulates cell elongation by modulating MT organization. The polypeptide is Katanin p80 WD40 repeat-containing subunit B1 homolog KTN80.3 (Arabidopsis thaliana (Mouse-ear cress)).